A 224-amino-acid polypeptide reads, in one-letter code: Heme response regulator HssR (224 aa).

The Response regulatory domain occupies 3 to 116 (QCLVVDDDPR…ELIFRIRAVL (114 aa)). 4-aspartylphosphate is present on D52. Residues 124-222 (NSEMTIGNLT…VRGQGYKVEN (99 aa)) constitute a DNA-binding region (ompR/PhoB-type).

In terms of processing, phosphorylated by HssS.

It is found in the cytoplasm. Member of the two-component regulatory system HssS/HssR involved in intracellular heme homeostasis and tempering of staphylococcal virulence. Phosphorylated HssR binds to a direct repeat sequence within hrtAB promoter and activates the expression of hrtAB, an efflux pump, in response to extracellular heme, hemin, hemoglobin or blood. In Staphylococcus aureus (strain COL), this protein is Heme response regulator HssR (hssR).